The sequence spans 358 residues: GTPase Obg (358 aa).

Positions 1-159 constitute an Obg domain; sequence MKFVDEVTIR…RNLHLELRLL (159 aa). One can recognise an OBG-type G domain in the interval 160–334; sequence ADVGLLGMPN…LAQDVMNRLE (175 aa). Residues 166–173, 191–195, 213–216, 284–287, and 315–317 contribute to the GTP site; these read GMPNAGKS, FTTLY, DIPG, NKLD, and SAL. Ser-173 and Thr-193 together coordinate Mg(2+). Residues 337–358 are disordered; it reads DEEAREAGERARREQRQEEGPE. A compositionally biased stretch (basic and acidic residues) spans 341–358; that stretch reads REAGERARREQRQEEGPE.

Belongs to the TRAFAC class OBG-HflX-like GTPase superfamily. OBG GTPase family. Monomer. Requires Mg(2+) as cofactor.

The protein resides in the cytoplasm. Its function is as follows. An essential GTPase which binds GTP, GDP and possibly (p)ppGpp with moderate affinity, with high nucleotide exchange rates and a fairly low GTP hydrolysis rate. Plays a role in control of the cell cycle, stress response, ribosome biogenesis and in those bacteria that undergo differentiation, in morphogenesis control. The chain is GTPase Obg from Alkalilimnicola ehrlichii (strain ATCC BAA-1101 / DSM 17681 / MLHE-1).